A 714-amino-acid chain; its full sequence is Probable serine/threonine-protein kinase At1g09600 (714 aa).

Residues 1–64 (MGCNCTKGTR…NVGFEERSND (64 aa)) are disordered. Gly-2 is lipidated: N-myristoyl glycine. The span at 16-27 (VDNSNSIVSNVN) shows a compositional bias: low complexity. Over residues 31 to 46 (RRSKPKKTPKKKKKSK) the composition is skewed to basic residues. The Protein kinase domain occupies 163–447 (FEKLEKIGQG…TASALESEFF (285 aa)). ATP is bound by residues 169–177 (IGQGTYSSV) and Lys-192. Catalysis depends on Asp-287, which acts as the Proton acceptor. Basic and acidic residues predominate over residues 471–498 (KAQEEEAKRKKDTSSKQNDSKQVSRESK). Disordered stretches follow at residues 471–579 (KAQE…RKEL) and 693–714 (VDKKTNRGDNRQTQAFLAANGR). Polar residues-rich tracts occupy residues 506-528 (NAESLTSIQKRQGQHNQVSNSDK) and 556-573 (GVSSVNRNGENVMMGSSR).

It belongs to the protein kinase superfamily. Ser/Thr protein kinase family.

The chain is Probable serine/threonine-protein kinase At1g09600 from Arabidopsis thaliana (Mouse-ear cress).